Reading from the N-terminus, the 104-residue chain is Enhancer of rudimentary homolog 1 (104 aa).

Belongs to the E(R) family. As to quaternary structure, homodimer. Component of the erh1-mmi1 complex. Interacts with mmi1 (via N-terminus) in a 2:2 stoichiometry.

The protein localises to the nucleus. Its subcellular location is the cytoplasm. Functionally, forms part of the erh1-mmi1 complex that recruits the CCR4-NOT complex and the NURS complex to target RNAs. Suppresses the meiotic program during vegetative growth and promotes the meiotic program during mating. Recruitment of the NURS complex to target mRNAs promotes mRNA decay by engagement of the nuclear exosome, and formation of heterochromatin islands at meiotic genes silenced by the exosome. Recruitment of the CCR4-NOT complex to target RNAs promotes heterochromatin formation at RNAi-dependent heterochromatin domains (HOODs), including a subset of meiotic genes, lncRNAs and retrotransposons. Recruitment of the CCR4-NOT complex to rDNA promotes rDNA heterochromatin assembly. The protein is Enhancer of rudimentary homolog 1 of Schizosaccharomyces pombe (strain 972 / ATCC 24843) (Fission yeast).